Consider the following 262-residue polypeptide: Alpha-tubulin N-acetyltransferase 1 (262 aa).

The N-acetyltransferase domain occupies 1-177; it reads MQVDADLRPI…TNFVVFEELF (177 aa). An acetyl-CoA-binding site is contributed by 111–124; that stretch reads FYVHFSCQRQGVGQ.

This sequence belongs to the acetyltransferase ATAT1 family. In terms of tissue distribution, expressed solely in touch receptor neurons.

The enzyme catalyses L-lysyl-[alpha-tubulin] + acetyl-CoA = N(6)-acetyl-L-lysyl-[alpha-tubulin] + CoA + H(+). Functionally, specifically acetylates 'Lys-40' in alpha-tubulin/mec-12 on the lumenal side of microtubules. Promotes microtubule destabilization and accelerates microtubule dynamics; this activity may be independent of acetylation activity. Acetylates alpha-tubulin with a slow enzymatic rate, due to a catalytic site that is not optimized for acetyl transfer. Enters the microtubule through each end and diffuses quickly throughout the lumen of microtubules. Acetylates only long/old microtubules because of its slow acetylation rate since it does not have time to act on dynamically unstable microtubules before the enzyme is released. Required for the maintenance of touch receptor neurons and possibly other type of neurons involved in locomotion. Regulates the number and localization of mitochondria in mechanosensory neurons. Plays a role in axonal transport. The polypeptide is Alpha-tubulin N-acetyltransferase 1 (Caenorhabditis elegans).